Reading from the N-terminus, the 141-residue chain is Protein MGF 100-2L (141 aa).

It belongs to the asfivirus MGF 100 family.

In terms of biological role, plays a role in virus cell tropism, and may be required for efficient virus replication in macrophages. This chain is Protein MGF 100-2L, found in African swine fever virus (isolate Pig/Kenya/KEN-50/1950) (ASFV).